A 157-amino-acid polypeptide reads, in one-letter code: Small ribosomal subunit protein uS7 (157 aa).

Belongs to the universal ribosomal protein uS7 family. In terms of assembly, part of the 30S ribosomal subunit. Contacts proteins S9 and S11.

One of the primary rRNA binding proteins, it binds directly to 16S rRNA where it nucleates assembly of the head domain of the 30S subunit. Is located at the subunit interface close to the decoding center, probably blocks exit of the E-site tRNA. The chain is Small ribosomal subunit protein uS7 from Salinibacter ruber (strain DSM 13855 / M31).